The primary structure comprises 369 residues: MDGAPVAEFRPTMTHGGRYLLYDIFGNKFEVTNKYQPPIMPIGRGAYGIVCSVMNFETREMVAIKKIANAFNNDMDAKRTLREIKLLRHLDHENIIGIRDVIPPPIPQAFNDVYIATELMDTDLHHIIRSNQELSEEHCQYFLYQILRGLKYIHSANVIHRDLKPSNLLLNANCDLKICDFGLARPSSESDMMTEYVVTRWYRAPELLLNSTDYSAAIDVWSVGCIFMELINRQPLFPGRDHMHQMRLITEVIGTPTDDELGFIRNEDARKYMRHLPQYPRRTFASMFPRVQPAALDLIERMLTFNPLQRITVEEALDHPYLERLHDIADEPICLEPFSFDFEQKALNEDQMKQLIFNEAIEMNPNIRY.

One can recognise a Protein kinase domain in the interval 36–322 (QPPIMPIGRG…VEEALDHPYL (287 aa)). ATP contacts are provided by residues 42-50 (IGRGAYGIV) and Lys-65. The Proton acceptor role is filled by Asp-162. Thr-194 is modified (phosphothreonine). Residues 194-196 (TEY) carry the TXY motif. Tyr-196 carries the phosphotyrosine modification.

The protein belongs to the protein kinase superfamily. CMGC Ser/Thr protein kinase family. MAP kinase subfamily. Interacts with MKK1. Dually phosphorylated on Thr-194 and Tyr-196, which activates the enzyme.

The catalysed reaction is L-seryl-[protein] + ATP = O-phospho-L-seryl-[protein] + ADP + H(+). It carries out the reaction L-threonyl-[protein] + ATP = O-phospho-L-threonyl-[protein] + ADP + H(+). With respect to regulation, activated by threonine and tyrosine phosphorylation. Involved in disease resistance and abiotic stress tolerance signaling pathways. This is Mitogen-activated protein kinase 5 (MPK5) from Oryza sativa subsp. indica (Rice).